A 162-amino-acid polypeptide reads, in one-letter code: RNA pyrophosphohydrolase (162 aa).

A Nudix hydrolase domain is found at 11 to 155 (PYRPCVGIVL…KRAVYEEVVA (145 aa)). Positions 45–66 (GGIDEGEKPREAALRELWEETG) match the Nudix box motif.

Belongs to the Nudix hydrolase family. RppH subfamily. A divalent metal cation is required as a cofactor.

In terms of biological role, accelerates the degradation of transcripts by removing pyrophosphate from the 5'-end of triphosphorylated RNA, leading to a more labile monophosphorylated state that can stimulate subsequent ribonuclease cleavage. The sequence is that of RNA pyrophosphohydrolase from Cereibacter sphaeroides (strain ATCC 17029 / ATH 2.4.9) (Rhodobacter sphaeroides).